The chain runs to 273 residues: HTH-type transcriptional regulator NimR (273 aa).

Positions 158–258 (PKIRTMVEMM…GQTPGRYIAR (101 aa)) constitute an HTH araC/xylS-type domain. 2 consecutive DNA-binding regions (H-T-H motif) follow at residues 178-199 (GQWA…VKET) and 225-248 (VQKV…KKGL).

Negatively regulates expression of the nimT operon and its own expression. Acts by binding to the nimR-nimT intergenic region. This is HTH-type transcriptional regulator NimR from Escherichia coli (strain K12).